The following is a 387-amino-acid chain: Chaperone protein DnaJ (387 aa).

Positions 4 to 68 (DFYDVLGVSR…EKRQMYDQLG (65 aa)) constitute a J domain. A disordered region spans residues 76 to 135 (EKRGGVGGGGNSSGGSARGDPFGGMGGQGSPFGDIFEQFFGGGQGQRRQGNRPRQGQNLQ). The segment covering 80–105 (GVGGGGNSSGGSARGDPFGGMGGQGS) has biased composition (gly residues). Residues 121 to 133 (QRRQGNRPRQGQN) are compositionally biased toward low complexity. Residues 148–230 (GVEKQFTVRR…CNGDGVTRQE (83 aa)) form a CR-type zinc finger. The Zn(2+) site is built by Cys161, Cys164, Cys178, Cys181, Cys204, Cys207, Cys218, and Cys221. 4 CXXCXGXG motif repeats span residues 161–168 (CPDCNGRG), 178–185 (CPQCNGQG), 204–211 (CPRCDGSG), and 218–225 (CSTCNGDG).

It belongs to the DnaJ family. Homodimer. It depends on Zn(2+) as a cofactor.

The protein localises to the cytoplasm. Functionally, participates actively in the response to hyperosmotic and heat shock by preventing the aggregation of stress-denatured proteins and by disaggregating proteins, also in an autonomous, DnaK-independent fashion. Unfolded proteins bind initially to DnaJ; upon interaction with the DnaJ-bound protein, DnaK hydrolyzes its bound ATP, resulting in the formation of a stable complex. GrpE releases ADP from DnaK; ATP binding to DnaK triggers the release of the substrate protein, thus completing the reaction cycle. Several rounds of ATP-dependent interactions between DnaJ, DnaK and GrpE are required for fully efficient folding. Also involved, together with DnaK and GrpE, in the DNA replication of plasmids through activation of initiation proteins. The chain is Chaperone protein DnaJ from Haloquadratum walsbyi (strain DSM 16790 / HBSQ001).